Reading from the N-terminus, the 101-residue chain is Pore-forming peptide amoebapore C (101 aa).

The N-terminal stretch at 1–24 (MKLFVLLCVFVLCLASQEKQQDRE) is a signal peptide. The Saposin B-type domain occupies 25–101 (IPVLCPVCTS…KLICGLIHAC (77 aa)). Intrachain disulfides connect Cys29-Cys101, Cys32-Cys95, and Cys59-Cys70.

In terms of assembly, monomer. Homodimer. Hexamer; formed during insertion in the membrane.

The protein localises to the cytoplasmic granule. Functionally, forms pores in the cell membrane of host cells. Has antibacterial activity against M.luteus, no activity against E.coli. Implicated in the cytolytic activity of the parasite. In Entamoeba histolytica (strain ATCC 30459 / HM-1:IMSS / ABRM), this protein is Pore-forming peptide amoebapore C.